We begin with the raw amino-acid sequence, 407 residues long: Peptidase T (407 aa).

Residue His81 participates in Zn(2+) binding. Asp83 is an active-site residue. Asp142 is a Zn(2+) binding site. Glu176 (proton acceptor) is an active-site residue. Zn(2+) is bound by residues Glu177, Asp199, and His381.

The protein belongs to the peptidase M20B family. Zn(2+) is required as a cofactor.

The protein localises to the cytoplasm. It catalyses the reaction Release of the N-terminal residue from a tripeptide.. In terms of biological role, cleaves the N-terminal amino acid of tripeptides. The sequence is that of Peptidase T from Streptococcus sanguinis (strain SK36).